Consider the following 415-residue polypeptide: Serine hydroxymethyltransferase (415 aa).

(6S)-5,6,7,8-tetrahydrofolate-binding positions include Leu117 and 121-123 (GHL). An N6-(pyridoxal phosphate)lysine modification is found at Lys226. Residues Glu241 and 349–351 (SPF) contribute to the (6S)-5,6,7,8-tetrahydrofolate site.

Belongs to the SHMT family. Homodimer. Requires pyridoxal 5'-phosphate as cofactor.

It is found in the cytoplasm. The enzyme catalyses (6R)-5,10-methylene-5,6,7,8-tetrahydrofolate + glycine + H2O = (6S)-5,6,7,8-tetrahydrofolate + L-serine. The protein operates within one-carbon metabolism; tetrahydrofolate interconversion. It functions in the pathway amino-acid biosynthesis; glycine biosynthesis; glycine from L-serine: step 1/1. Its function is as follows. Catalyzes the reversible interconversion of serine and glycine with tetrahydrofolate (THF) serving as the one-carbon carrier. This reaction serves as the major source of one-carbon groups required for the biosynthesis of purines, thymidylate, methionine, and other important biomolecules. Also exhibits THF-independent aldolase activity toward beta-hydroxyamino acids, producing glycine and aldehydes, via a retro-aldol mechanism. The sequence is that of Serine hydroxymethyltransferase from Geobacter sulfurreducens (strain ATCC 51573 / DSM 12127 / PCA).